Here is a 385-residue protein sequence, read N- to C-terminus: Heterogeneous nuclear ribonucleoprotein 87F (385 aa).

RRM domains follow at residues 24-101 (RKLF…RAVP) and 115-192 (KKLF…KAIA). 2 disordered regions span residues 192 to 289 (AKQD…WNGG) and 305 to 385 (GNGG…NRRY). 2 stretches are compositionally biased toward gly residues: residues 199–289 (QGGG…WNGG) and 305–317 (GNGGGGGGGGGFG). Polar residues predominate over residues 319–336 (EYQQSYGGGPQRNSNFGN). Gly residues-rich tracts occupy residues 344–362 (QGGGGGGFNKGNQGGGQGF) and 369–385 (TGGGGQGGNMGGGNRRY).

The protein localises to the nucleus. It is found in the cytoplasm. Functionally, this protein is a component of ribonucleosomes. Could be needed to organize a concentration gradient of a dorsalizing morphogen (Dm) originating in the germinal vesicle. This is Heterogeneous nuclear ribonucleoprotein 87F (Hrb87F) from Drosophila melanogaster (Fruit fly).